We begin with the raw amino-acid sequence, 95 residues long: uncharacterized protein (95 aa).

This is an uncharacterized protein from Escherichia coli (strain K12).